Here is a 481-residue protein sequence, read N- to C-terminus: NADH-quinone oxidoreductase subunit N (481 aa).

The next 13 membrane-spanning stretches (helical) occupy residues 14-34 (LILSVGALLLLLVAAFGGDGF), 38-57 (IGWGAVALFAAAGFSLTGPA), 76-96 (FAKLLIYIAAAVSVAVAPGFF), 108-128 (PVLILLSGVGMGMMVSAGDLL), 162-182 (FVLGALASGILLYGISLLYGF), 204-224 (MFGMVFVFAGLAFKISAVPFH), 235-255 (PTPVTAFFASAPKVAGMALLL), 272-292 (IVVFAALASTILGAVAAIGQT), 297-317 (LLAYSSINNVGFALFGLAAGS), 323-343 (ATMTYMAVYVAMTLGSFICVL), 369-389 (LAAAFAIFMFSLAGIPPLFGF), 403-423 (GFWPLAMVGIATSVIGAFYYL), and 449-469 (GLITLAALAVSPLGYLAIPLL).

The protein belongs to the complex I subunit 2 family. NDH-1 is composed of 14 different subunits. Subunits NuoA, H, J, K, L, M, N constitute the membrane sector of the complex.

The protein localises to the cell inner membrane. It catalyses the reaction a quinone + NADH + 5 H(+)(in) = a quinol + NAD(+) + 4 H(+)(out). Its function is as follows. NDH-1 shuttles electrons from NADH, via FMN and iron-sulfur (Fe-S) centers, to quinones in the respiratory chain. The immediate electron acceptor for the enzyme in this species is believed to be ubiquinone. Couples the redox reaction to proton translocation (for every two electrons transferred, four hydrogen ions are translocated across the cytoplasmic membrane), and thus conserves the redox energy in a proton gradient. The sequence is that of NADH-quinone oxidoreductase subunit N from Rhizorhabdus wittichii (strain DSM 6014 / CCUG 31198 / JCM 15750 / NBRC 105917 / EY 4224 / RW1) (Sphingomonas wittichii).